We begin with the raw amino-acid sequence, 320 residues long: Glutaconate CoA-transferase subunit A (320 aa).

This sequence belongs to the 3-oxoacid CoA-transferase subunit A family. In terms of assembly, heterooctamer of four A and four B subunits.

It localises to the cytoplasm. It carries out the reaction trans-glutaconate + acetyl-CoA = (2E)-glutaconyl-CoA + acetate. Its pathway is amino-acid degradation; L-glutamate degradation via hydroxyglutarate pathway; crotonoyl-CoA from L-glutamate: step 3/5. In terms of biological role, catalyzes the transfer of the CoA moiety from acetyl-CoA to (R)-2-hydroxyglutarate and related compounds like glutaconate. The chain is Glutaconate CoA-transferase subunit A (gctA) from Acidaminococcus fermentans (strain ATCC 25085 / DSM 20731 / CCUG 9996 / CIP 106432 / VR4).